The primary structure comprises 382 residues: Dual-specificity RNA methyltransferase RlmN (382 aa).

The Proton acceptor role is filled by E96. The Radical SAM core domain occupies 102-342 (QGKRGTLCVS…VRTTRGEDID (241 aa)). A disulfide bond links C109 and C345. Residues C116, C120, and C123 each contribute to the [4Fe-4S] cluster site. S-adenosyl-L-methionine is bound by residues 170-171 (GE), S202, 224-226 (SLH), and N302. C345 acts as the S-methylcysteine intermediate in catalysis.

Belongs to the radical SAM superfamily. RlmN family. Requires [4Fe-4S] cluster as cofactor.

It is found in the cytoplasm. It carries out the reaction adenosine(2503) in 23S rRNA + 2 reduced [2Fe-2S]-[ferredoxin] + 2 S-adenosyl-L-methionine = 2-methyladenosine(2503) in 23S rRNA + 5'-deoxyadenosine + L-methionine + 2 oxidized [2Fe-2S]-[ferredoxin] + S-adenosyl-L-homocysteine. The catalysed reaction is adenosine(37) in tRNA + 2 reduced [2Fe-2S]-[ferredoxin] + 2 S-adenosyl-L-methionine = 2-methyladenosine(37) in tRNA + 5'-deoxyadenosine + L-methionine + 2 oxidized [2Fe-2S]-[ferredoxin] + S-adenosyl-L-homocysteine. In terms of biological role, specifically methylates position 2 of adenine 2503 in 23S rRNA and position 2 of adenine 37 in tRNAs. m2A2503 modification seems to play a crucial role in the proofreading step occurring at the peptidyl transferase center and thus would serve to optimize ribosomal fidelity. The protein is Dual-specificity RNA methyltransferase RlmN of Pseudomonas syringae pv. syringae (strain B728a).